Consider the following 235-residue polypeptide: Cell division protein FtsQ (235 aa).

At methionine 1–arginine 6 the chain is on the cytoplasmic side. Residues tryptophan 7–tyrosine 25 form a helical membrane-spanning segment. The Periplasmic segment spans residues asparagine 26–glutamate 235. Residues leucine 30 to arginine 99 enclose the POTRA domain.

This sequence belongs to the FtsQ/DivIB family. FtsQ subfamily. As to quaternary structure, part of a complex composed of FtsB, FtsL and FtsQ.

It localises to the cell inner membrane. Functionally, essential cell division protein. May link together the upstream cell division proteins, which are predominantly cytoplasmic, with the downstream cell division proteins, which are predominantly periplasmic. May control correct divisome assembly. This chain is Cell division protein FtsQ, found in Neisseria meningitidis serogroup B (strain ATCC BAA-335 / MC58).